A 115-amino-acid chain; its full sequence is uncharacterized protein (115 aa).

Positions 1-29 (MKKAMAILAVLAAAAVICGLLFFHNDVTD) are cleaved as a signal peptide.

This is an uncharacterized protein from Bacillus subtilis (strain 168).